The following is a 274-amino-acid chain: Putative pyruvate, phosphate dikinase regulatory protein (274 aa).

An ADP-binding site is contributed by 153–160 (GISRTSKT).

The protein belongs to the pyruvate, phosphate/water dikinase regulatory protein family. PDRP subfamily.

The catalysed reaction is N(tele)-phospho-L-histidyl/L-threonyl-[pyruvate, phosphate dikinase] + ADP = N(tele)-phospho-L-histidyl/O-phospho-L-threonyl-[pyruvate, phosphate dikinase] + AMP + H(+). The enzyme catalyses N(tele)-phospho-L-histidyl/O-phospho-L-threonyl-[pyruvate, phosphate dikinase] + phosphate + H(+) = N(tele)-phospho-L-histidyl/L-threonyl-[pyruvate, phosphate dikinase] + diphosphate. Bifunctional serine/threonine kinase and phosphorylase involved in the regulation of the pyruvate, phosphate dikinase (PPDK) by catalyzing its phosphorylation/dephosphorylation. This chain is Putative pyruvate, phosphate dikinase regulatory protein, found in Bartonella tribocorum (strain CIP 105476 / IBS 506).